A 565-amino-acid chain; its full sequence is Adenine deaminase 1 (565 aa).

Belongs to the metallo-dependent hydrolases superfamily. Adenine deaminase family. Requires Mn(2+) as cofactor.

It catalyses the reaction adenine + H2O + H(+) = hypoxanthine + NH4(+). This Rhizobium etli (strain ATCC 51251 / DSM 11541 / JCM 21823 / NBRC 15573 / CFN 42) protein is Adenine deaminase 1.